The sequence spans 421 residues: 5-hydroxytryptamine receptor 1A (421 aa).

The Extracellular portion of the chain corresponds to 1–38; the sequence is MDMFSLGQGNNTTTSLEPFGTGGNDTGLSNVTFSYQVI. Residues Asn10, Asn11, Asn24, and Asn30 are each glycosylated (N-linked (GlcNAc...) asparagine). A helical membrane pass occupies residues 39-59; it reads TSLLLGTLIFCAVLGNACVVA. Residues 60-73 lie on the Cytoplasmic side of the membrane; it reads AIALERSLQNVANY. A helical membrane pass occupies residues 74–98; sequence LIGSLAVTDLMVSVLVLPMAALYQV. Topologically, residues 99-107 are extracellular; it reads LNKWTLGQV. Residues 108 to 132 traverse the membrane as a helical segment; it reads TCDLFIALDVLCCTSSILHLCAIAL. A disulfide bond links Cys109 and Cys187. Serotonin-binding residues include Asp116 and Cys120. The short motif at 133 to 135 is the DRY motif; important for ligand-induced conformation changes element; it reads DRY. Residues 133-152 lie on the Cytoplasmic side of the membrane; the sequence is DRYWAITDPIDYVNKRTPRR. Residues 153-174 traverse the membrane as a helical segment; it reads AAALISLTWLIGFLISIPPMLG. At 175–193 the chain is on the extracellular side; sequence WRTPEDRSNPNECTISKDH. A helical membrane pass occupies residues 194 to 216; sequence GYTIYSTFGAFYIPLLLMLVLYG. Topologically, residues 217–346 are cytoplasmic; the sequence is RIFRAARFRI…LARERKTVKT (130 aa). Residues 237 to 268 are disordered; the sequence is GAGTSFGTSSAPPPKKSLNGQPGSGDCRRSAE. Thr314, Lys345, Thr346, and Gly352 together coordinate 1D-myo-inositol 4-phosphate. A helical transmembrane segment spans residues 347-370; that stretch reads LGIIMGTFILCWLPFFIVALVLPF. Residues 371–378 lie on the Extracellular side of the membrane; the sequence is CESSCHMP. A helical membrane pass occupies residues 379-403; it reads ELLGAIINWLGYSNSLLNPVIYAYF. The NPxxY motif; important for ligand-induced conformation changes and signaling motif lies at 396–400; that stretch reads NPVIY. Positions 403, 404, and 405 each coordinate 1D-myo-inositol 4-phosphate. Residues 404–421 are Cytoplasmic-facing; the sequence is NKDFQNAFKKIIKCKFCR.

Belongs to the G-protein coupled receptor 1 family. 5-hydroxytryptamine receptor subfamily. HTR1A sub-subfamily. Heterodimer; heterodimerizes with GPER1. Interacts with YIF1B. Interacts with GPR39 and GALR1. Most abundantly expressed in midbrain, in dorsal raphe and hippocampus. Detected at lower levels in amygdala and brain cortex.

The protein resides in the cell membrane. It localises to the cell projection. The protein localises to the dendrite. Its activity is regulated as follows. G-protein coupled receptor activity is regulated by lipids: phosphatidylinositol 4-phosphate increases HTR1A-mediated activity. Plays a role in the regulation of dopamine and 5-hydroxytryptamine levels in the brain, and thereby affects neural activity, mood and behavior. Plays a role in the response to anxiogenic stimuli. G-protein coupled receptor for 5-hydroxytryptamine (serotonin). Also functions as a receptor for various drugs and psychoactive substances. Ligand binding causes a conformation change that triggers signaling via guanine nucleotide-binding proteins (G proteins) and modulates the activity of downstream effectors, such as adenylate cyclase. HTR1A is coupled to G(i)/G(o) G alpha proteins and mediates inhibitory neurotransmission: signaling inhibits adenylate cyclase activity and activates a phosphatidylinositol-calcium second messenger system that regulates the release of Ca(2+) ions from intracellular stores. Beta-arrestin family members regulate signaling by mediating both receptor desensitization and resensitization processes. The protein is 5-hydroxytryptamine receptor 1A (Htr1a) of Mus musculus (Mouse).